The following is a 151-amino-acid chain: Ubiquitin-like protein 4A-B (151 aa).

A Ubiquitin-like domain is found at Met1 to Glu76.

In terms of assembly, component of the BAT3 complex.

The protein localises to the cytoplasm. It localises to the cytosol. Its function is as follows. Component of the BAT3 complex, a multiprotein complex involved in the post-translational delivery of tail-anchored (TA) membrane proteins to the endoplasmic reticulum membrane. TA membrane proteins, also named type II transmembrane proteins, contain a single C-terminal transmembrane region. The polypeptide is Ubiquitin-like protein 4A-B (ubl4ab) (Oncorhynchus mykiss (Rainbow trout)).